The following is a 170-amino-acid chain: Large ribosomal subunit protein uL10 (170 aa).

It belongs to the universal ribosomal protein uL10 family. Part of the ribosomal stalk of the 50S ribosomal subunit. The N-terminus interacts with L11 and the large rRNA to form the base of the stalk. The C-terminus forms an elongated spine to which L12 dimers bind in a sequential fashion forming a multimeric L10(L12)X complex.

In terms of biological role, forms part of the ribosomal stalk, playing a central role in the interaction of the ribosome with GTP-bound translation factors. This chain is Large ribosomal subunit protein uL10, found in Lactobacillus acidophilus (strain ATCC 700396 / NCK56 / N2 / NCFM).